The following is a 198-amino-acid chain: Endoribonuclease YbeY (198 aa).

Residues His156, His160, and His166 each coordinate Zn(2+).

Belongs to the endoribonuclease YbeY family. Zn(2+) is required as a cofactor.

The protein resides in the cytoplasm. Its function is as follows. Single strand-specific metallo-endoribonuclease involved in late-stage 70S ribosome quality control and in maturation of the 3' terminus of the 16S rRNA. In Cupriavidus necator (strain ATCC 17699 / DSM 428 / KCTC 22496 / NCIMB 10442 / H16 / Stanier 337) (Ralstonia eutropha), this protein is Endoribonuclease YbeY.